The sequence spans 423 residues: Serine--tRNA ligase (423 aa).

Position 230-232 (230-232 (TAE)) interacts with L-serine. 261-263 (RSE) contacts ATP. Glutamate 284 contacts L-serine. 348-351 (EISS) lines the ATP pocket. Serine 383 provides a ligand contact to L-serine.

Belongs to the class-II aminoacyl-tRNA synthetase family. Type-1 seryl-tRNA synthetase subfamily. Homodimer. The tRNA molecule binds across the dimer.

Its subcellular location is the cytoplasm. The enzyme catalyses tRNA(Ser) + L-serine + ATP = L-seryl-tRNA(Ser) + AMP + diphosphate + H(+). It carries out the reaction tRNA(Sec) + L-serine + ATP = L-seryl-tRNA(Sec) + AMP + diphosphate + H(+). It participates in aminoacyl-tRNA biosynthesis; selenocysteinyl-tRNA(Sec) biosynthesis; L-seryl-tRNA(Sec) from L-serine and tRNA(Sec): step 1/1. Its function is as follows. Catalyzes the attachment of serine to tRNA(Ser). Is also able to aminoacylate tRNA(Sec) with serine, to form the misacylated tRNA L-seryl-tRNA(Sec), which will be further converted into selenocysteinyl-tRNA(Sec). This chain is Serine--tRNA ligase, found in Levilactobacillus brevis (strain ATCC 367 / BCRC 12310 / CIP 105137 / JCM 1170 / LMG 11437 / NCIMB 947 / NCTC 947) (Lactobacillus brevis).